The sequence spans 202 residues: MLELYEKRRALLLLRLAAMFLSLAALLITVLNREDGFFSINVFGSPQPILTKATADFTLVKGLKFFAGAMGIVAGYSFLQLAIAMASMFSGAPSILGGKRMAWLCFVGDMTASHLCAAAAAVSAQLAYLGKRGAPMWSAVCTYFSHYCLVFGLAVIFAFLATLAALLVASISSYHLFRLHGILQQQQQQRRQLQQEHVQDKP.

The Cytoplasmic portion of the chain corresponds to 1–10; that stretch reads MLELYEKRRA. Residues 11–31 traverse the membrane as a helical segment; it reads LLLLRLAAMFLSLAALLITVL. Residues 32–64 are Extracellular-facing; sequence NREDGFFSINVFGSPQPILTKATADFTLVKGLK. The helical transmembrane segment at 65-85 threads the bilayer; sequence FFAGAMGIVAGYSFLQLAIAM. At 86–101 the chain is on the cytoplasmic side; it reads ASMFSGAPSILGGKRM. The helical transmembrane segment at 102–122 threads the bilayer; it reads AWLCFVGDMTASHLCAAAAAV. At 123 to 148 the chain is on the extracellular side; it reads SAQLAYLGKRGAPMWSAVCTYFSHYC. The helical transmembrane segment at 149 to 169 threads the bilayer; the sequence is LVFGLAVIFAFLATLAALLVA. Residues 170–202 lie on the Cytoplasmic side of the membrane; it reads SISSYHLFRLHGILQQQQQQRRQLQQEHVQDKP.

This sequence belongs to the Casparian strip membrane proteins (CASP) family. Homodimer and heterodimers.

The protein resides in the cell membrane. This Selaginella moellendorffii (Spikemoss) protein is CASP-like protein 2U7.